Consider the following 473-residue polypeptide: MKTLYSLRRFYPVETLFNGTLAXAGRDQETTGFAWWAGNARLINLSGKLLGAHVAHAGLIVFWAGAMNLFEVAHFVPEKPMYEQGLILLPHLATLGWGVGPGGEVIDTFPYFVSGVLHLISSAVLGFGGIYHALLGPETLEESFPFFGYVWKDRNKMTTILGIHLILLGIGAFLLVFKALYFGGVYDTWAPGGGDVRKITNLTLSPSVIFGYLLKSPFGGEGWIVSVDDLEDIIGGHVWLGSICILGGIWHILTKPFAWARRALVWSGEAYLSYSLAALSVFGFIACCFVWFNNTAYPSEFYGPTGPEASQAQAFTFLVRDQRLGANVGSAQGPTGLGKYLMRSPTGEVIFGGETMRFWDLRAPWLEPLRGPNGLDLSRLKKDIQPWQERRSAEYMTHAPLGSLNSVGGVATEINAVNYVSPRSWLATSHFVLGFFLFVGHLWHAGRARAAAAGFEKGIDRDFEPVLSMTPLN.

Positions 1-14 are excised as a propeptide; it reads MKTLYSLRRFYPVE. Residue T15 is modified to N-acetylthreonine. T15 carries the post-translational modification Phosphothreonine. The next 5 helical transmembrane spans lie at 69 to 93, 134 to 155, 178 to 200, 255 to 275, and 291 to 312; these read LFEV…PHLA, LLGP…KDRN, KALY…RKIT, KPFA…LSYS, and WFNN…ASQA. A [CaMn4O5] cluster-binding site is contributed by E367. The helical transmembrane segment at 447 to 471 threads the bilayer; sequence RARAAAAGFEKGIDRDFEPVLSMTP.

It belongs to the PsbB/PsbC family. PsbC subfamily. In terms of assembly, PSII is composed of 1 copy each of membrane proteins PsbA, PsbB, PsbC, PsbD, PsbE, PsbF, PsbH, PsbI, PsbJ, PsbK, PsbL, PsbM, PsbT, PsbX, PsbY, PsbZ, Psb30/Ycf12, at least 3 peripheral proteins of the oxygen-evolving complex and a large number of cofactors. It forms dimeric complexes. It depends on Binds multiple chlorophylls and provides some of the ligands for the Ca-4Mn-5O cluster of the oxygen-evolving complex. It may also provide a ligand for a Cl- that is required for oxygen evolution. PSII binds additional chlorophylls, carotenoids and specific lipids. as a cofactor.

The protein localises to the plastid. The protein resides in the chloroplast thylakoid membrane. One of the components of the core complex of photosystem II (PSII). It binds chlorophyll and helps catalyze the primary light-induced photochemical processes of PSII. PSII is a light-driven water:plastoquinone oxidoreductase, using light energy to abstract electrons from H(2)O, generating O(2) and a proton gradient subsequently used for ATP formation. The polypeptide is Photosystem II CP43 reaction center protein (Eucalyptus globulus subsp. globulus (Tasmanian blue gum)).